A 187-amino-acid chain; its full sequence is Elongation factor P (187 aa).

The protein belongs to the elongation factor P family.

It localises to the cytoplasm. The protein operates within protein biosynthesis; polypeptide chain elongation. Involved in peptide bond synthesis. Stimulates efficient translation and peptide-bond synthesis on native or reconstituted 70S ribosomes in vitro. Probably functions indirectly by altering the affinity of the ribosome for aminoacyl-tRNA, thus increasing their reactivity as acceptors for peptidyl transferase. This Helicobacter pylori (strain J99 / ATCC 700824) (Campylobacter pylori J99) protein is Elongation factor P (efp).